Here is a 142-residue protein sequence, read N- to C-terminus: Large ribosomal subunit protein uL13 (142 aa).

This sequence belongs to the universal ribosomal protein uL13 family. Part of the 50S ribosomal subunit.

This protein is one of the early assembly proteins of the 50S ribosomal subunit, although it is not seen to bind rRNA by itself. It is important during the early stages of 50S assembly. This is Large ribosomal subunit protein uL13 from Pseudomonas syringae pv. tomato (strain ATCC BAA-871 / DC3000).